Here is a 350-residue protein sequence, read N- to C-terminus: (S)-tetrahydroprotoberberine N-methyltransferase (350 aa).

S-adenosyl-L-methionine contacts are provided by Ser91, Gly129, Asn153, Gln157, Asp179, Val180, and Val195. Cys325 is an active-site residue.

This sequence belongs to the CFA/CMAS family. In terms of assembly, homodimer.

The protein localises to the cytoplasm. The catalysed reaction is (S)-stylopine + S-adenosyl-L-methionine = (S)-cis-N-methylstylopine + S-adenosyl-L-homocysteine. It carries out the reaction (S)-tetrahydropalmatine + S-adenosyl-L-methionine = (S)-cis-N-methyltetrahydropalmatine + S-adenosyl-L-homocysteine. It catalyses the reaction (S)-canadine + S-adenosyl-L-methionine = (S)-cis-N-methylcanadine + S-adenosyl-L-homocysteine. The enzyme catalyses (S)-scoulerine + S-adenosyl-L-methionine = (S)-cis-N-methylscoulerine + S-adenosyl-L-homocysteine. Its pathway is alkaloid biosynthesis. In terms of biological role, N-methyltransferase with a broad substrate range, accepting protoberberine alkaloids (R,S)-stylopine, (R,S)-nandinine and (R,S)-tetrahydropalmatine, and to a lesser extent (R,S)-canadine, (R,S)-tetrahydrogroenlandicine (cheilanthifoline) and (S)-scoulerine. In Eschscholzia californica (California poppy), this protein is (S)-tetrahydroprotoberberine N-methyltransferase.